The chain runs to 332 residues: Thiamine thiazole synthase (332 aa).

Residues Cys-87, 108-109 (EA), Gly-116, and Val-184 each bind substrate. A 2,3-didehydroalanine (Cys) modification is found at Cys-221. Residues Asp-223, His-238, Met-290, and 300 to 302 (RMG) contribute to the substrate site.

This sequence belongs to the THI4 family. In terms of assembly, homooctamer. Requires Fe cation as cofactor. Post-translationally, during the catalytic reaction, a sulfide is transferred from Cys-221 to a reaction intermediate, generating a dehydroalanine residue.

The protein resides in the cytoplasm. Its subcellular location is the nucleus. The enzyme catalyses [ADP-thiazole synthase]-L-cysteine + glycine + NAD(+) = [ADP-thiazole synthase]-dehydroalanine + ADP-5-ethyl-4-methylthiazole-2-carboxylate + nicotinamide + 3 H2O + 2 H(+). In terms of biological role, involved in biosynthesis of the thiamine precursor thiazole. Catalyzes the conversion of NAD and glycine to adenosine diphosphate 5-(2-hydroxyethyl)-4-methylthiazole-2-carboxylic acid (ADT), an adenylated thiazole intermediate. The reaction includes an iron-dependent sulfide transfer from a conserved cysteine residue of the protein to a thiazole intermediate. The enzyme can only undergo a single turnover, which suggests it is a suicide enzyme. May have additional roles in adaptation to various stress conditions and in DNA damage tolerance. This is Thiamine thiazole synthase from Aspergillus fumigatus (strain ATCC MYA-4609 / CBS 101355 / FGSC A1100 / Af293) (Neosartorya fumigata).